The chain runs to 282 residues: HTH-type transcriptional activator RhaR (282 aa).

The HTH araC/xylS-type domain occupies 179–277; that stretch reads DKLITALANS…GMTPSQWRHL (99 aa). 2 consecutive DNA-binding regions (H-T-H motif) follow at residues 196-217 and 244-267; these read DAFCQQEQCSERVLRQQFRAQT and ISEISMQCGFEDSNYFSVVFTRET.

In terms of assembly, binds DNA as a dimer.

It localises to the cytoplasm. In terms of biological role, activates expression of the rhaSR operon in response to L-rhamnose. This Salmonella typhimurium (strain LT2 / SGSC1412 / ATCC 700720) protein is HTH-type transcriptional activator RhaR.